Consider the following 185-residue polypeptide: Large ribosomal subunit protein uL5 (185 aa).

The protein belongs to the universal ribosomal protein uL5 family. Part of the 50S ribosomal subunit; part of the 5S rRNA/L5/L18/L25 subcomplex. Contacts the 5S rRNA and the P site tRNA. Forms a bridge to the 30S subunit in the 70S ribosome.

Its function is as follows. This is one of the proteins that bind and probably mediate the attachment of the 5S RNA into the large ribosomal subunit, where it forms part of the central protuberance. In the 70S ribosome it contacts protein S13 of the 30S subunit (bridge B1b), connecting the 2 subunits; this bridge is implicated in subunit movement. Contacts the P site tRNA; the 5S rRNA and some of its associated proteins might help stabilize positioning of ribosome-bound tRNAs. This Rhizobium rhizogenes (strain K84 / ATCC BAA-868) (Agrobacterium radiobacter) protein is Large ribosomal subunit protein uL5.